The following is a 380-amino-acid chain: Cytochrome b (380 aa).

4 helical membrane passes run 34 to 54, 78 to 99, 114 to 134, and 179 to 199; these read FGSL…LLAM, WLIR…YLHI, WNTG…GYVL, and FFAL…IHLT. 2 residues coordinate heme b: His84 and His98. 2 residues coordinate heme b: His183 and His197. His202 lines the a ubiquinone pocket. 4 helical membrane passes run 227 to 247, 289 to 309, 321 to 341, and 348 to 368; these read LKDI…ALFS, LGGV…PFLH, LSQL…WVGS, and FIII…ILFP.

Belongs to the cytochrome b family. In terms of assembly, the cytochrome bc1 complex contains 11 subunits: 3 respiratory subunits (MT-CYB, CYC1 and UQCRFS1), 2 core proteins (UQCRC1 and UQCRC2) and 6 low-molecular weight proteins (UQCRH/QCR6, UQCRB/QCR7, UQCRQ/QCR8, UQCR10/QCR9, UQCR11/QCR10 and a cleavage product of UQCRFS1). This cytochrome bc1 complex then forms a dimer. The cofactor is heme b.

Its subcellular location is the mitochondrion inner membrane. Functionally, component of the ubiquinol-cytochrome c reductase complex (complex III or cytochrome b-c1 complex) that is part of the mitochondrial respiratory chain. The b-c1 complex mediates electron transfer from ubiquinol to cytochrome c. Contributes to the generation of a proton gradient across the mitochondrial membrane that is then used for ATP synthesis. This chain is Cytochrome b (MT-CYB), found in Macronectes giganteus (Southern giant petrel).